The primary structure comprises 188 residues: Small ribosomal subunit protein bS16 (188 aa).

The disordered stretch occupies residues 155-188; the sequence is IAAASATEEAATEEVAEAAEEAPAAEENNETTEA. The segment covering 164 to 188 has biased composition (acidic residues); it reads AATEEVAEAAEEAPAAEENNETTEA.

It belongs to the bacterial ribosomal protein bS16 family.

This chain is Small ribosomal subunit protein bS16, found in Flavobacterium johnsoniae (strain ATCC 17061 / DSM 2064 / JCM 8514 / BCRC 14874 / CCUG 350202 / NBRC 14942 / NCIMB 11054 / UW101) (Cytophaga johnsonae).